Reading from the N-terminus, the 350-residue chain is Guanine nucleotide-binding protein G(t) subunit alpha-1 (350 aa).

Residues 1-21 are disordered; sequence MGAGASAEEKHSRELEKKLKE. G2 carries the N-myristoyl glycine lipid modification. The span at 7-21 shows a compositional bias: basic and acidic residues; sequence AEEKHSRELEKKLKE. In terms of domain architecture, G-alpha spans 28-350; the sequence is RTVKLLLLGA…KENLKDCGLF (323 aa). The segment at 31 to 44 is G1 motif; it reads KLLLLGAGESGKST. 36–43 serves as a coordination point for GTP; that stretch reads GAGESGKS. Mg(2+) is bound at residue S43. Y142 is subject to Phosphotyrosine. GTP is bound by residues D146, 171–177, G199, 265–268, and A322; these read LRSRVKT and NKKD. Residues 169–177 are G2 motif; it reads DVLRSRVKT. T177 contributes to the Mg(2+) binding site. The G3 motif stretch occupies residues 192–201; that stretch reads FRMFDVGGQR. Residues 261–268 form a G4 motif region; the sequence is VLFLNKKD. The interval 320–325 is G5 motif; the sequence is TCATDT. Residues 340–350 are interaction with RHO; that stretch reads IKENLKDCGLF.

As to quaternary structure, heterotrimeric G proteins are composed of 3 subunits alpha, beta and gamma. The alpha chain contains the guanine nucleotide binding site. Interacts with RHO. Interacts with RGS9 and PDE6G. Interacts (when myristoylated) with UNC119; interaction is required for localization in sensory neurons. In terms of tissue distribution, rod.

The protein localises to the cell projection. It localises to the cilium. Its subcellular location is the photoreceptor outer segment. It is found in the membrane. The protein resides in the photoreceptor inner segment. Its function is as follows. Functions as a signal transducer for the rod photoreceptor RHO. Required for normal RHO-mediated light perception by the retina. Guanine nucleotide-binding proteins (G proteins) function as transducers downstream of G protein-coupled receptors (GPCRs), such as the photoreceptor RHO. The alpha chain contains the guanine nucleotide binding site and alternates between an active, GTP-bound state and an inactive, GDP-bound state. Activated RHO promotes GDP release and GTP binding. Signaling is mediated via downstream effector proteins, such as cGMP-phosphodiesterase. In Bos taurus (Bovine), this protein is Guanine nucleotide-binding protein G(t) subunit alpha-1 (GNAT1).